A 465-amino-acid polypeptide reads, in one-letter code: Ribosome biogenesis protein YTM1 (465 aa).

The tract at residues 18–99 is ubiquitin-like (UBL) domain; the sequence is ARLRFSTRDE…ETTLDVEYVR (82 aa). WD repeat units follow at residues 111–153, 160–198, 205–242, 277–317, 319–358, 364–404, and 427–465; these read LHDD…IHTS, GHQS…KGIT, GHKG…SPAV, GHTA…LVDT, TTSH…TTVS, GHTN…TDTD, and GDGV…PKTA. Residues 235–272 are disordered; sequence KKSESPAVPQNLLPSSSARSSKRRKLNSSASTSQRGPL.

The protein belongs to the WD repeat WDR12/YTM1 family. Component of the NOP7 complex, composed of ERB1, NOP7 and YTM1. The complex is held together by ERB1, which interacts with NOP7 via its N-terminal domain and with YTM1 via a high-affinity interaction between the seven-bladed beta-propeller domains of the 2 proteins. The NOP7 complex associates with the 66S pre-ribosome. Interacts (via UBL domain) with MDN1 (via VWFA/MIDAS domain).

It localises to the nucleus. The protein localises to the nucleolus. It is found in the nucleoplasm. In terms of biological role, component of the NOP7 complex, which is required for maturation of the 25S and 5.8S ribosomal RNAs and formation of the 60S ribosome. This chain is Ribosome biogenesis protein YTM1, found in Coccidioides immitis (strain RS) (Valley fever fungus).